The following is a 447-amino-acid chain: Argininosuccinate synthase (447 aa).

Residues 17–25 (AFSGGLDTS) and alanine 43 each bind ATP. Tyrosine 99 contributes to the L-citrulline binding site. ATP is bound by residues glycine 129 and threonine 131. L-aspartate-binding residues include threonine 131, asparagine 135, and aspartate 136. Asparagine 135 serves as a coordination point for L-citrulline. Aspartate 136 serves as a coordination point for ATP. L-citrulline-binding residues include arginine 139 and serine 192. Aspartate 194 serves as a coordination point for ATP. 3 residues coordinate L-citrulline: threonine 201, glutamate 203, and glutamate 280.

It belongs to the argininosuccinate synthase family. Type 2 subfamily. As to quaternary structure, homotetramer.

It localises to the cytoplasm. It carries out the reaction L-citrulline + L-aspartate + ATP = 2-(N(omega)-L-arginino)succinate + AMP + diphosphate + H(+). The protein operates within amino-acid biosynthesis; L-arginine biosynthesis; L-arginine from L-ornithine and carbamoyl phosphate: step 2/3. The polypeptide is Argininosuccinate synthase (Salmonella heidelberg (strain SL476)).